The primary structure comprises 833 residues: MTASPDPAQRIDALRRRIEDANYRYHVLDEPQMADADYDKLMRELEALERAHPELASADSPTQRVGHLAASRFAEVRHALPMLSLGNAFSEEEVTEFVRRISERLEVKQPLFSAEPKLDGLAISLRYENGEFVQGATRGDGATGEDVSANLRTVKAIPLRLRGEGWPQVLEVRGEVYMPRAAFEAYNAQMRAQGGKVLANPRNGAAGSLRQLDARITAQRPLSFFAYGVGEVSEGALPQTHSAILAQLRAWGFPVSALVEVVQGSDGLLAYYQRIGAARDGLAFDIDGVVYKLDDLAGQREMGFVSRAPRWAIAHKFPAQEQSTTVEAIEIQIGRTGAATPVARLKPVHVAGVIVTNATLHNADQIARLDVRVGDTVIVRRAGDVIPEVAAVVADQRPPGTQAWQMPTQCPVCGSQIVREEGQAVWRCSGELTCPAQRKEAFRHFVSRRAMDVDGLGEKFIEVLVDSGLVKGVADLYLLSVDQLLQLRLISTAESPHAFLREAREHLASGAYAQLETSVVGIGVDLAGERDVPQTWQADLLRAGLPRFDWNRKKIATKWAENLIEAIETSRDTTLERFLFALGIEHVGESTAKALSAWFGDLELIRHLPWPLFKRVPDIGGEVARSLGHFFDQAGNQQAIDDLLQRGVRIGDTHPPSPKLREALSFASVLEDMDIPKVTPVRAQQLAASVDSFAALRTAGADALQQAGVPAPVVAALLQWLDRPENTALANAAQQAMETVLARLPQADALQTGPLDGQTVVITGTLAALTRDAAKQRLEALGAKVAGSVSKKTAFLVAGEEAGSKLDKAQSLGVEIWGEARLLAFLGDHGQQP.

NAD(+) is bound by residues D35 to D39, S84 to L85, and E115. K117 (N6-AMP-lysine intermediate) is an active-site residue. NAD(+) is bound by residues R138, E175, K292, and K316. Zn(2+) contacts are provided by C410, C413, C428, and C434. Residues L750–P833 enclose the BRCT domain.

Belongs to the NAD-dependent DNA ligase family. LigA subfamily. Requires Mg(2+) as cofactor. The cofactor is Mn(2+).

The enzyme catalyses NAD(+) + (deoxyribonucleotide)n-3'-hydroxyl + 5'-phospho-(deoxyribonucleotide)m = (deoxyribonucleotide)n+m + AMP + beta-nicotinamide D-nucleotide.. Functionally, DNA ligase that catalyzes the formation of phosphodiester linkages between 5'-phosphoryl and 3'-hydroxyl groups in double-stranded DNA using NAD as a coenzyme and as the energy source for the reaction. It is essential for DNA replication and repair of damaged DNA. In Xanthomonas euvesicatoria pv. vesicatoria (strain 85-10) (Xanthomonas campestris pv. vesicatoria), this protein is DNA ligase.